We begin with the raw amino-acid sequence, 473 residues long: Glutamate--tRNA ligase (473 aa).

Positions 11 to 21 (PSPTGFLHIGG) match the 'HIGH' region motif. The short motif at 240-244 (KLSKR) is the 'KMSKS' region element. Lysine 243 is an ATP binding site.

This sequence belongs to the class-I aminoacyl-tRNA synthetase family. Glutamate--tRNA ligase type 1 subfamily. In terms of assembly, monomer.

It localises to the cytoplasm. It carries out the reaction tRNA(Glu) + L-glutamate + ATP = L-glutamyl-tRNA(Glu) + AMP + diphosphate. Functionally, catalyzes the attachment of glutamate to tRNA(Glu) in a two-step reaction: glutamate is first activated by ATP to form Glu-AMP and then transferred to the acceptor end of tRNA(Glu). The sequence is that of Glutamate--tRNA ligase from Rhodopseudomonas palustris (strain TIE-1).